The primary structure comprises 302 residues: Ribonuclease HII (302 aa).

One can recognise an RNase H type-2 domain in the interval Glu-53–Ala-297. Asp-59, Glu-60, and Asp-163 together coordinate a divalent metal cation.

It belongs to the RNase HII family. It depends on Mn(2+) as a cofactor. Mg(2+) is required as a cofactor.

Its subcellular location is the cytoplasm. The enzyme catalyses Endonucleolytic cleavage to 5'-phosphomonoester.. Functionally, endonuclease that specifically degrades the RNA of RNA-DNA hybrids. The polypeptide is Ribonuclease HII (Psychrobacter sp. (strain PRwf-1)).